Here is a 399-residue protein sequence, read N- to C-terminus: Elongation factor Tu (399 aa).

Positions Lys10–Val209 constitute a tr-type G domain. The segment at Gly19–Thr26 is G1. Gly19–Thr26 contributes to the GTP binding site. Thr26 contributes to the Mg(2+) binding site. The tract at residues Gly62–Asn66 is G2. The G3 stretch occupies residues Asp83 to Gly86. GTP contacts are provided by residues Asp83–His87 and Asn138–Asp141. Positions Asn138 to Asp141 are G4. The G5 stretch occupies residues Ser175–Tyr177.

This sequence belongs to the TRAFAC class translation factor GTPase superfamily. Classic translation factor GTPase family. EF-Tu/EF-1A subfamily. In terms of assembly, monomer.

It is found in the cytoplasm. The catalysed reaction is GTP + H2O = GDP + phosphate + H(+). GTP hydrolase that promotes the GTP-dependent binding of aminoacyl-tRNA to the A-site of ribosomes during protein biosynthesis. The sequence is that of Elongation factor Tu from Bifidobacterium longum (strain DJO10A).